Consider the following 227-residue polypeptide: UPF0173 metal-dependent hydrolase Oter_4201 (227 aa).

Belongs to the UPF0173 family.

The polypeptide is UPF0173 metal-dependent hydrolase Oter_4201 (Opitutus terrae (strain DSM 11246 / JCM 15787 / PB90-1)).